A 38-amino-acid chain; its full sequence is Large ribosomal subunit protein bL36 (38 aa).

The protein belongs to the bacterial ribosomal protein bL36 family.

The protein is Large ribosomal subunit protein bL36 of Chloroflexus aurantiacus (strain ATCC 29366 / DSM 635 / J-10-fl).